A 556-amino-acid polypeptide reads, in one-letter code: Threonylcarbamoyladenosine tRNA methylthiotransferase (556 aa).

A disordered region spans residues serine 17 to proline 57. Residues glutamine 60–lysine 168 enclose the MTTase N-terminal domain. Positions 69, 105, 134, 210, 214, and 217 each coordinate [4Fe-4S] cluster. The Radical SAM core domain maps to arginine 196–aspartate 427. Residues aspartate 427–glutamine 489 form the TRAM domain. Residues valine 536–valine 556 traverse the membrane as a helical segment.

Belongs to the methylthiotransferase family. CDKAL1 subfamily. It depends on [4Fe-4S] cluster as a cofactor.

Its subcellular location is the endoplasmic reticulum membrane. The catalysed reaction is N(6)-L-threonylcarbamoyladenosine(37) in tRNA + (sulfur carrier)-SH + AH2 + 2 S-adenosyl-L-methionine = 2-methylsulfanyl-N(6)-L-threonylcarbamoyladenosine(37) in tRNA + (sulfur carrier)-H + 5'-deoxyadenosine + L-methionine + A + S-adenosyl-L-homocysteine + 2 H(+). Catalyzes the methylthiolation of N6-threonylcarbamoyladenosine (t(6)A), leading to the formation of 2-methylthio-N6-threonylcarbamoyladenosine (ms(2)t(6)A) at position 37 in tRNAs that read codons beginning with adenine. In Xenopus laevis (African clawed frog), this protein is Threonylcarbamoyladenosine tRNA methylthiotransferase (cdkal1).